The primary structure comprises 492 residues: GTPase Der (492 aa).

EngA-type G domains follow at residues 3-167 and 201-381; these read FTLA…DAYA and LQVA…EVWN. GTP-binding positions include 9 to 16, 56 to 60, 119 to 122, 207 to 214, 259 to 263, and 324 to 327; these read GRPNVGKS, DTAGL, NKAE, GRPNAGKS, DTAGM, and NKWD. Residues 382–468 enclose the KH-like domain; sequence RRVTTAQLNR…RLWMRGQNDA (87 aa). Positions 462–492 are disordered; the sequence is MRGQNDANPYKGRKKAPPSKLRKHTDGRRKD. A compositionally biased stretch (basic residues) spans 472–492; it reads KGRKKAPPSKLRKHTDGRRKD.

The protein belongs to the TRAFAC class TrmE-Era-EngA-EngB-Septin-like GTPase superfamily. EngA (Der) GTPase family. As to quaternary structure, associates with the 50S ribosomal subunit.

Its function is as follows. GTPase that plays an essential role in the late steps of ribosome biogenesis. This is GTPase Der from Roseobacter denitrificans (strain ATCC 33942 / OCh 114) (Erythrobacter sp. (strain OCh 114)).